The primary structure comprises 468 residues: Citrate synthase, mitochondrial (468 aa).

The N-terminal 30 residues, 1 to 30 (MSFLSISRLAPRLLSSKNAACVVVAARNAS), are a transit peptide targeting the mitochondrion. Catalysis depends on residues His-303 and His-349. Residue Arg-358 coordinates oxaloacetate. Residue Asp-404 is part of the active site. Positions 430 and 450 each coordinate oxaloacetate.

The protein belongs to the citrate synthase family. In terms of assembly, homodimer.

The protein resides in the mitochondrion matrix. It carries out the reaction oxaloacetate + acetyl-CoA + H2O = citrate + CoA + H(+). It participates in carbohydrate metabolism; tricarboxylic acid cycle; isocitrate from oxaloacetate: step 1/2. Key enzyme of the Krebs tricarboxylic acid cycle which catalyzes the synthesis of citrate from acetyl coenzyme A and oxaloacetate. The protein is Citrate synthase, mitochondrial (cs) of Danio rerio (Zebrafish).